The following is a 271-amino-acid chain: Glutamate racemase (271 aa).

Substrate contacts are provided by residues 10-11 and 42-43; these read DS and YG. Cysteine 73 (proton donor/acceptor) is an active-site residue. 74 to 75 contributes to the substrate binding site; the sequence is NT. Cysteine 183 (proton donor/acceptor) is an active-site residue. 184 to 185 provides a ligand contact to substrate; the sequence is TH.

The protein belongs to the aspartate/glutamate racemases family.

It carries out the reaction L-glutamate = D-glutamate. The protein operates within cell wall biogenesis; peptidoglycan biosynthesis. Provides the (R)-glutamate required for cell wall biosynthesis. In Lactococcus lactis subsp. lactis (strain IL1403) (Streptococcus lactis), this protein is Glutamate racemase.